The chain runs to 329 residues: 4-hydroxythreonine-4-phosphate dehydrogenase (329 aa).

Positions 136 and 137 each coordinate substrate. Residues H166, H211, and H266 each contribute to the a divalent metal cation site. 3 residues coordinate substrate: K274, N283, and R292.

Belongs to the PdxA family. As to quaternary structure, homodimer. Requires Zn(2+) as cofactor. It depends on Mg(2+) as a cofactor. Co(2+) serves as cofactor.

Its subcellular location is the cytoplasm. The enzyme catalyses 4-(phosphooxy)-L-threonine + NAD(+) = 3-amino-2-oxopropyl phosphate + CO2 + NADH. It participates in cofactor biosynthesis; pyridoxine 5'-phosphate biosynthesis; pyridoxine 5'-phosphate from D-erythrose 4-phosphate: step 4/5. Functionally, catalyzes the NAD(P)-dependent oxidation of 4-(phosphooxy)-L-threonine (HTP) into 2-amino-3-oxo-4-(phosphooxy)butyric acid which spontaneously decarboxylates to form 3-amino-2-oxopropyl phosphate (AHAP). In Shigella boydii serotype 18 (strain CDC 3083-94 / BS512), this protein is 4-hydroxythreonine-4-phosphate dehydrogenase.